The primary structure comprises 238 residues: Large ribosomal subunit protein uL1 (238 aa).

The protein belongs to the universal ribosomal protein uL1 family. As to quaternary structure, part of the 50S ribosomal subunit.

Binds directly to 23S rRNA. The L1 stalk is quite mobile in the ribosome, and is involved in E site tRNA release. Its function is as follows. Protein L1 is also a translational repressor protein, it controls the translation of the L11 operon by binding to its mRNA. In Frankia casuarinae (strain DSM 45818 / CECT 9043 / HFP020203 / CcI3), this protein is Large ribosomal subunit protein uL1.